Reading from the N-terminus, the 508-residue chain is Photosystem II CP47 reaction center protein (508 aa).

Transmembrane regions (helical) follow at residues 21–36 (SVHI…WAGS), 101–115 (IVFS…IWHW), 140–156 (GIHL…FGAF), 203–218 (IAAG…FHLS), 237–252 (VLSS…AFVV), and 457–472 (SFAL…HGAR).

It belongs to the PsbB/PsbC family. PsbB subfamily. In terms of assembly, PSII is composed of 1 copy each of membrane proteins PsbA, PsbB, PsbC, PsbD, PsbE, PsbF, PsbH, PsbI, PsbJ, PsbK, PsbL, PsbM, PsbT, PsbX, PsbY, PsbZ, Psb30/Ycf12, at least 3 peripheral proteins of the oxygen-evolving complex and a large number of cofactors. It forms dimeric complexes. The cofactor is Binds multiple chlorophylls. PSII binds additional chlorophylls, carotenoids and specific lipids..

The protein resides in the plastid. It localises to the chloroplast thylakoid membrane. In terms of biological role, one of the components of the core complex of photosystem II (PSII). It binds chlorophyll and helps catalyze the primary light-induced photochemical processes of PSII. PSII is a light-driven water:plastoquinone oxidoreductase, using light energy to abstract electrons from H(2)O, generating O(2) and a proton gradient subsequently used for ATP formation. This chain is Photosystem II CP47 reaction center protein, found in Lemna minor (Common duckweed).